We begin with the raw amino-acid sequence, 375 residues long: Alcohol dehydrogenase 1 (375 aa).

Serine 1 carries the N-acetylserine modification. Zn(2+) contacts are provided by cysteine 46, histidine 67, cysteine 97, cysteine 100, cysteine 103, cysteine 111, and cysteine 175. NAD(+) contacts are provided by residues 200 to 205, aspartate 224, lysine 229, 293 to 295, and arginine 370; these read GLGGVG and VGV.

Belongs to the zinc-containing alcohol dehydrogenase family. Class-I subfamily. Homodimer. Zn(2+) serves as cofactor.

It localises to the cytoplasm. It catalyses the reaction a primary alcohol + NAD(+) = an aldehyde + NADH + H(+). It carries out the reaction a secondary alcohol + NAD(+) = a ketone + NADH + H(+). The protein is Alcohol dehydrogenase 1 (ADH1) of Coturnix japonica (Japanese quail).